Consider the following 2273-residue polypeptide: Acetyl-CoA carboxylase, mitochondrial (2273 aa).

The transit peptide at 1 to 104 (KGKTITHGQS…RGNIHKHTRL (104 aa)) directs the protein to the mitochondrion. One can recognise a Biotin carboxylation domain in the interval 134-635 (VISKILIANN…STGWLDDLIL (502 aa)). The ATP-grasp domain occupies 292–484 (KTNFVSVPDD…LPATQLQIAM (193 aa)). An ATP-binding site is contributed by 332 to 337 (GGGGKG). Residue arginine 459 is part of the active site. The Biotinyl-binding domain maps to 763–837 (LEAELNPTQV…EAGDVIAKLT (75 aa)). Position 804 is an N6-biotinyllysine (lysine 804). A CoA carboxyltransferase N-terminal domain is found at 1532–1867 (PYSVKDWLQP…KRDMSPPLLE (336 aa)). Residues 1532–2187 (PYSVKDWLQP…EGQVIKRLQK (656 aa)) form a carboxyltransferase region. Positions 1776, 2080, and 2082 each coordinate CoA. One can recognise a CoA carboxyltransferase C-terminal domain in the interval 1871–2187 (RWDRDVDFKP…EGQVIKRLQK (317 aa)).

Requires biotin as cofactor.

It localises to the mitochondrion. It catalyses the reaction hydrogencarbonate + acetyl-CoA + ATP = malonyl-CoA + ADP + phosphate + H(+). It carries out the reaction N(6)-biotinyl-L-lysyl-[protein] + hydrogencarbonate + ATP = N(6)-carboxybiotinyl-L-lysyl-[protein] + ADP + phosphate + H(+). It participates in lipid metabolism; malonyl-CoA biosynthesis; malonyl-CoA from acetyl-CoA: step 1/1. In terms of biological role, catalyzes the rate-limiting reaction in the mitochondrial fatty acid synthesis (FAS) type II pathway. Responsible for the production of the mitochondrial malonyl-CoA, used for the biosynthesis of the cofactor lipoic acid. This protein carries three functions: biotin carboxyl carrier protein, biotin carboxylase, and carboxyltransferase. The chain is Acetyl-CoA carboxylase, mitochondrial (HFA1) from Saccharomyces cerevisiae (strain RM11-1a) (Baker's yeast).